A 151-amino-acid chain; its full sequence is Transcriptional repressor NrdR (151 aa).

A zinc finger spans residues 3 to 34; it reads CPYCAYGESKVVDSRSTEDGSSIRRRRECLKC. In terms of domain architecture, ATP-cone spans 49-139; sequence ILVIKKNMSR…VYRQFKDINT (91 aa).

It belongs to the NrdR family. The cofactor is Zn(2+).

Functionally, negatively regulates transcription of bacterial ribonucleotide reductase nrd genes and operons by binding to NrdR-boxes. This chain is Transcriptional repressor NrdR, found in Clostridium botulinum (strain 657 / Type Ba4).